We begin with the raw amino-acid sequence, 416 residues long: Gamma-glutamyl phosphate reductase (416 aa).

Belongs to the gamma-glutamyl phosphate reductase family.

It is found in the cytoplasm. It carries out the reaction L-glutamate 5-semialdehyde + phosphate + NADP(+) = L-glutamyl 5-phosphate + NADPH + H(+). Its pathway is amino-acid biosynthesis; L-proline biosynthesis; L-glutamate 5-semialdehyde from L-glutamate: step 2/2. In terms of biological role, catalyzes the NADPH-dependent reduction of L-glutamate 5-phosphate into L-glutamate 5-semialdehyde and phosphate. The product spontaneously undergoes cyclization to form 1-pyrroline-5-carboxylate. The protein is Gamma-glutamyl phosphate reductase of Streptococcus pyogenes serotype M3 (strain ATCC BAA-595 / MGAS315).